The sequence spans 823 residues: Leucine--tRNA ligase (823 aa).

The 'HIGH' region signature appears at 42 to 52 (PYPSGTLHMGH). The short motif at 575–579 (KMSKS) is the 'KMSKS' region element. Lysine 578 provides a ligand contact to ATP.

It belongs to the class-I aminoacyl-tRNA synthetase family.

It localises to the cytoplasm. It carries out the reaction tRNA(Leu) + L-leucine + ATP = L-leucyl-tRNA(Leu) + AMP + diphosphate. In Legionella pneumophila subsp. pneumophila (strain Philadelphia 1 / ATCC 33152 / DSM 7513), this protein is Leucine--tRNA ligase.